A 393-amino-acid polypeptide reads, in one-letter code: MALQPASGARDLLPRDVGVNRWIAEQLAAVYQRWGYEEVTPPSLERIDTLEAGGAIQSHQVVQVVADEALGLRPEMTASIARAACTRLAAMQRPLRLHYRGSTFQAQRAEDQGLRIVEDLQSGVELMGAKGLAGDAELLRLLLDAGSHLPLSAEHQPTLLIGHQRLLSVLLEAVEPSLRSTVRRHVCGLNRVALSQLELPGQQRLQLLQLLQLRGEPAAVLNGLEALLGATDLLAELKQLISIIEEQASRAGIRLQLDPTFHPDFELYDGVMVKLVCQGLDAPVAIASGGRYDALVQRFSPVGAVASGVGFSFAVEAVRQLLEQADQLPPRLDGQLVLVAYSQSSQLHPALNLLEQLHQSGQPAELWPEPCANQDEAQGIATQRGVQTVRWVG.

Belongs to the class-II aminoacyl-tRNA synthetase family. HisZ subfamily. In terms of assembly, heteromultimer composed of HisG and HisZ subunits.

It is found in the cytoplasm. Its pathway is amino-acid biosynthesis; L-histidine biosynthesis; L-histidine from 5-phospho-alpha-D-ribose 1-diphosphate: step 1/9. In terms of biological role, required for the first step of histidine biosynthesis. May allow the feedback regulation of ATP phosphoribosyltransferase activity by histidine. The polypeptide is ATP phosphoribosyltransferase regulatory subunit (Synechococcus sp. (strain RCC307)).